We begin with the raw amino-acid sequence, 20 residues long: U27-ctenitoxin-Pn1a (20 aa).

The tract at residues 1-20 (LAKRADICQPGKTSQRACET) is disordered. The segment covering 11–20 (GKTSQRACET) has biased composition (polar residues).

Contains 4 disulfide bonds. In terms of tissue distribution, expressed by the venom gland.

The protein resides in the secreted. Its function is as follows. Has a vascular smooth muscle contracting activity. Causes short-lived contractions of both arterial and venous rabbit vessels. The protein is U27-ctenitoxin-Pn1a of Phoneutria nigriventer (Brazilian armed spider).